The chain runs to 226 residues: Ribonuclease 3 (226 aa).

In terms of domain architecture, RNase III spans 6 to 128 (MKKLQKFIGY…IIASIFLDSN (123 aa)). Residue Glu41 coordinates Mg(2+). Asp45 is an active-site residue. Asn114 and Glu117 together coordinate Mg(2+). Residue Glu117 is part of the active site. Residues 155 to 225 (DPKTRLQEYL…AQNALIRLEV (71 aa)) form the DRBM domain.

This sequence belongs to the ribonuclease III family. As to quaternary structure, homodimer. Requires Mg(2+) as cofactor.

Its subcellular location is the cytoplasm. It catalyses the reaction Endonucleolytic cleavage to 5'-phosphomonoester.. Its function is as follows. Digests double-stranded RNA. Involved in the processing of primary rRNA transcript to yield the immediate precursors to the large and small rRNAs (23S and 16S). Processes some mRNAs, and tRNAs when they are encoded in the rRNA operon. Processes pre-crRNA and tracrRNA of type II CRISPR loci if present in the organism. The chain is Ribonuclease 3 from Buchnera aphidicola subsp. Cinara cedri (strain Cc).